A 217-amino-acid chain; its full sequence is Thiopurine S-methyltransferase (217 aa).

Residues Trp10, Leu45, Glu66, and Arg123 each coordinate S-adenosyl-L-methionine.

The protein belongs to the class I-like SAM-binding methyltransferase superfamily. TPMT family.

It localises to the cytoplasm. The enzyme catalyses S-adenosyl-L-methionine + a thiopurine = S-adenosyl-L-homocysteine + a thiopurine S-methylether.. This chain is Thiopurine S-methyltransferase, found in Pseudomonas fluorescens (strain Pf0-1).